The following is a 232-amino-acid chain: 5'-methylthioadenosine/S-adenosylhomocysteine nucleosidase (232 aa).

The active-site Proton acceptor is Glu12. Residues Gly78, Ile152, and 173–174 each bind substrate; that span reads ME. The active-site Proton donor is the Asp197.

The protein belongs to the PNP/UDP phosphorylase family. MtnN subfamily. As to quaternary structure, homodimer.

The enzyme catalyses S-adenosyl-L-homocysteine + H2O = S-(5-deoxy-D-ribos-5-yl)-L-homocysteine + adenine. The catalysed reaction is S-methyl-5'-thioadenosine + H2O = 5-(methylsulfanyl)-D-ribose + adenine. It catalyses the reaction 5'-deoxyadenosine + H2O = 5-deoxy-D-ribose + adenine. It functions in the pathway amino-acid biosynthesis; L-methionine biosynthesis via salvage pathway; S-methyl-5-thio-alpha-D-ribose 1-phosphate from S-methyl-5'-thioadenosine (hydrolase route): step 1/2. Functionally, catalyzes the irreversible cleavage of the glycosidic bond in both 5'-methylthioadenosine (MTA) and S-adenosylhomocysteine (SAH/AdoHcy) to adenine and the corresponding thioribose, 5'-methylthioribose and S-ribosylhomocysteine, respectively. Also cleaves 5'-deoxyadenosine, a toxic by-product of radical S-adenosylmethionine (SAM) enzymes, into 5-deoxyribose and adenine. Thus, is required for in vivo function of the radical SAM enzymes biotin synthase and lipoic acid synthase, that are inhibited by 5'-deoxyadenosine accumulation. This Erwinia tasmaniensis (strain DSM 17950 / CFBP 7177 / CIP 109463 / NCPPB 4357 / Et1/99) protein is 5'-methylthioadenosine/S-adenosylhomocysteine nucleosidase.